We begin with the raw amino-acid sequence, 299 residues long: Serpentine receptor class gamma-30 (299 aa).

7 consecutive transmembrane segments (helical) span residues 18–38 (GIQFVYFIVGLGFHFAVIKVL), 59–79 (ILSVLIILLDLVLIRVFNYIP), 98–118 (ILFIEQYLQFVKSLIFCFMVV), 137–157 (IIPHVIVFCILCPLLGVWTAF), 189–209 (IISSITIVTVCICSVISMLCI), 223–243 (LTASALAMSIFYVFALSMNIY), and 260–280 (ALTAFAFDIILVCPPVIMLCL).

Belongs to the nematode receptor-like protein srg family.

It localises to the membrane. The chain is Serpentine receptor class gamma-30 (srg-30) from Caenorhabditis elegans.